The chain runs to 804 residues: Probable replication endonuclease from prophage-like region (804 aa).

Residues Tyr-498 and Tyr-502 each act as O-(5'-phospho-DNA)-tyrosine intermediate in the active site.

It belongs to the phage GPA family.

Its function is as follows. Possible endonuclease which induces a single-strand cut and initiates DNA replication. The polypeptide is Probable replication endonuclease from prophage-like region (Shigella boydii serotype 4 (strain Sb227)).